The chain runs to 151 residues: MTHPLIPQIIDLATPIVEEMGLDVVEVVFQTNKRPPVLRVDIRNPASDTSLNDCEQVSRALEAVLDETAIMPGAYVLEISSPGISRYLNSERDFIAFKGFEVNIATNPPYKDKKEWRGRLQGRDEKAVYLNRKGRAIAIPCAVITKVQLAD.

It belongs to the RimP family.

It is found in the cytoplasm. Functionally, required for maturation of 30S ribosomal subunits. This is Ribosome maturation factor RimP from Crocosphaera subtropica (strain ATCC 51142 / BH68) (Cyanothece sp. (strain ATCC 51142)).